The chain runs to 181 residues: Protein Ves (181 aa).

This sequence belongs to the Ves family.

The sequence is that of Protein Ves from Cronobacter sakazakii (strain ATCC BAA-894) (Enterobacter sakazakii).